Reading from the N-terminus, the 1064-residue chain is Phosphatidylinositol 4,5-bisphosphate 3-kinase catalytic subunit beta isoform (1064 aa).

Positions 20-109 (SDGAISVDFL…LPVLKLVTRS (90 aa)) constitute a PI3K-ABD domain. The PI3K-RBD domain maps to 188–279 (GGKLVVAVHF…RTLPHFILVE (92 aa)). S318 carries the phosphoserine modification. In terms of domain architecture, C2 PI3K-type spans 323-490 (NNNPFQITLV…NATALHITFP (168 aa)). Residues 404–412 (KVKTKKSTK) carry the Nuclear localization signal (NLS) motif. Residues 518 to 695 (ANVSSRGGKK…GVILEAYCRG (178 aa)) enclose the PIK helical domain. In terms of domain architecture, PI3K/PI4K catalytic spans 766 to 1047 (YVEKCKYMDS…KFDEALRESW (282 aa)). The segment at 772–778 (YMDSKMK) is G-loop. The catalytic loop stretch occupies residues 910–918 (GIGDRHSDN). Residues 929–955 (HIDFGHILGNFKSKFGIKRERVPFILT) are activation loop. S1064 carries the phosphoserine; by autocatalysis modification.

The protein belongs to the PI3/PI4-kinase family. As to quaternary structure, heterodimer of a catalytic subunit PIK3CB and a p85 regulatory subunit (PIK3R1, PIK3R2 or PIK3R3). Interaction with PIK3R2 is required for nuclear localization and nuclear export. Part of a complex with PIK3R1 and PTEN. Binding to PTEN may antagonize the lipid kinase activity under normal growth conditions. Part of a complex involved in autophagosome formation composed of PIK3C3 and PIK3R4. Interacts with BECN1, ATG14 and RAB5A. Post-translationally, phosphorylation at Ser-1064 down-regulates lipid kinase activity. In terms of processing, autophosphorylation at Ser-1064 negatively regulates the phosphatidylinositol-4,5-bisphosphate 3-kinase activity.

The protein localises to the cytoplasm. Its subcellular location is the nucleus. It carries out the reaction a 1,2-diacyl-sn-glycero-3-phospho-(1D-myo-inositol-4,5-bisphosphate) + ATP = a 1,2-diacyl-sn-glycero-3-phospho-(1D-myo-inositol-3,4,5-trisphosphate) + ADP + H(+). It catalyses the reaction 1-octadecanoyl-2-(5Z,8Z,11Z,14Z)-eicosatetraenoyl-sn-glycero-3-phospho-1D-myo-inositol 4,5-bisphosphate + ATP = 1-octadecanoyl-2-(5Z,8Z,11Z,14Z-eicosatetraenoyl)-sn-glycero-3-phospho-(1D-myo-inositol 3,4,5-triphosphate) + ADP + H(+). The enzyme catalyses L-seryl-[protein] + ATP = O-phospho-L-seryl-[protein] + ADP + H(+). Its pathway is phospholipid metabolism; phosphatidylinositol phosphate biosynthesis. Functionally, phosphoinositide-3-kinase (PI3K) phosphorylates phosphatidylinositol (PI) derivatives at position 3 of the inositol ring to produce 3-phosphoinositides. Uses ATP and PtdIns(4,5)P2 (phosphatidylinositol 4,5-bisphosphate) to generate phosphatidylinositol 3,4,5-trisphosphate (PIP3). PIP3 plays a key role by recruiting PH domain-containing proteins to the membrane, including AKT1 and PDPK1, activating signaling cascades involved in cell growth, survival, proliferation, motility and morphology. Involved in the activation of AKT1 upon stimulation by G-protein coupled receptors (GPCRs) ligands such as CXCL12, sphingosine 1-phosphate, and lysophosphatidic acid. May also act downstream receptor tyrosine kinases. Required in different signaling pathways for stable platelet adhesion and aggregation. Plays a role in platelet activation signaling triggered by GPCRs, alpha-IIb/beta-3 integrins (ITGA2B/ ITGB3) and ITAM (immunoreceptor tyrosine-based activation motif)-bearing receptors such as GP6. Regulates the strength of adhesion of ITGA2B/ ITGB3 activated receptors necessary for the cellular transmission of contractile forces. Required for platelet aggregation induced by F2 (thrombin) and thromboxane A2 (TXA2). Has a role in cell survival. May have a role in cell migration. Involved in the early stage of autophagosome formation. Modulates the intracellular level of PtdIns3P (phosphatidylinositol 3-phosphate) and activates PIK3C3 kinase activity. May act as a scaffold, independently of its lipid kinase activity to positively regulate autophagy. May have a role in insulin signaling as scaffolding protein in which the lipid kinase activity is not required. May have a kinase-independent function in regulating cell proliferation and in clathrin-mediated endocytosis. Mediator of oncogenic signal in cell lines lacking PTEN. The lipid kinase activity is necessary for its role in oncogenic transformation. Required for the growth of ERBB2 and RAS driven tumors. Also has a protein kinase activity showing autophosphorylation. This is Phosphatidylinositol 4,5-bisphosphate 3-kinase catalytic subunit beta isoform (Pik3cb) from Mus musculus (Mouse).